Reading from the N-terminus, the 248-residue chain is 1-(5-phosphoribosyl)-5-[(5-phosphoribosylamino)methylideneamino] imidazole-4-carboxamide isomerase (248 aa).

Asp17 functions as the Proton acceptor in the catalytic mechanism. Residue Asp136 is the Proton donor of the active site.

It belongs to the HisA/HisF family.

Its subcellular location is the cytoplasm. It carries out the reaction 1-(5-phospho-beta-D-ribosyl)-5-[(5-phospho-beta-D-ribosylamino)methylideneamino]imidazole-4-carboxamide = 5-[(5-phospho-1-deoxy-D-ribulos-1-ylimino)methylamino]-1-(5-phospho-beta-D-ribosyl)imidazole-4-carboxamide. It functions in the pathway amino-acid biosynthesis; L-histidine biosynthesis; L-histidine from 5-phospho-alpha-D-ribose 1-diphosphate: step 4/9. The polypeptide is 1-(5-phosphoribosyl)-5-[(5-phosphoribosylamino)methylideneamino] imidazole-4-carboxamide isomerase (Arthrobacter sp. (strain FB24)).